The following is a 1112-amino-acid chain: Electrogenic sodium bicarbonate cotransporter 4 (1112 aa).

Basic and acidic residues predominate over residues 1–13 (MKVEEKAGVKKLE). Disordered stretches follow at residues 1–80 (MKVE…SSLG), 220–255 (KKPI…HHST), and 439–469 (GRSG…NEAE). Topologically, residues 1–513 (MKVEEKAGVK…DFYDGFHIQS (513 aa)) are cytoplasmic. Composition is skewed to polar residues over residues 53 to 67 (QRVQ…SQQD) and 233 to 244 (SVSTTNRSSARS). Gly residues predominate over residues 444 to 465 (SAGGGGSGGGAGGSGAGGGGSG). Residues 514–536 (ISAVLFIYLGCITNAITFGGLLG) form a helical membrane-spanning segment. Residues 537 to 547 (DATDNYQGVME) are Extracellular-facing. Residues 548–579 (SFLGTAMAGSLFCLFSGQPLIILSSTGPILIF) traverse the membrane as a helical segment. The Cytoplasmic portion of the chain corresponds to 580-598 (EKLLFDFSKANGLDYMEFR). The chain crosses the membrane as a helical span at residues 599-620 (LWIGLHSAIQCLILVATDASFI). Residues 621–734 (IKYITRFTEE…LGSSCQFVPD (114 aa)) lie on the Extracellular side of the membrane. A helical membrane pass occupies residues 735 to 753 (LALMSFILFFGTYSMTLTL). The Cytoplasmic portion of the chain corresponds to 754-772 (KKFKFSRYFPTKVRTLVAD). A helical transmembrane segment spans residues 773–792 (FSIVFSILLFCGIDACFGLQ). The Extracellular segment spans residues 793–820 (TPKLHVPNVIKPTRPDRGWFVAPFGKNP). A helical membrane pass occupies residues 821–839 (WWVYPASILPALLVTILIF). Residues 840–858 (MDQQITAVIVNRKENKLRK) are Cytoplasmic-facing. Residues 859–875 (AAGYHLDLFWVGILMAL) traverse the membrane as a helical segment. The Extracellular segment spans residues 876–880 (CSFMG). The helical transmembrane segment at 881-900 (LPWYVAATVISIAHIDSLKM) threads the bilayer. The Cytoplasmic segment spans residues 901 to 920 (ETETSAPGEQPQFLGVREQR). Residues 921 to 940 (VTGVMVFILTGISVFLAPIL) traverse the membrane as a helical segment. The Extracellular segment spans residues 941–945 (KYIPM). The chain crosses the membrane as a helical span at residues 946 to 966 (PVLYGVFLYMGVASLNGIQFW). Topologically, residues 967–992 (DRCKLFLMPAKHQPDHAFLRHVPLRR) are cytoplasmic. The helical transmembrane segment at 993–1010 (IHLFTLVQILCLALLWIL) threads the bilayer. At 1011–1015 (KSTMA) the chain is on the extracellular side. A helical membrane pass occupies residues 1016–1033 (AIIFPVMILGLIIVRRLL). The Cytoplasmic portion of the chain corresponds to 1034-1112 (DLIFSQHDLA…KRSSSWSHSL (79 aa)). The segment covering 1055-1074 (KESDRKKRRKEVHENTDKEP) has biased composition (basic and acidic residues). Residues 1055–1112 (KESDRKKRRKEVHENTDKEPQFLPPSVVKIPMEGIPSDPQNGIHCVGRKRSSSWSHSL) form a disordered region.

Belongs to the anion exchanger (TC 2.A.31) family. Observed in hepatocytes and in the apical region of bile duct intrahepatic cholangiocytes of liver. Also observed in uroepithelium cells lining the outer pelvic wall of the kidney (at protein level). Highly expressed in colon, distal colon, liver, kidney and testis. Moderate expression in duodenum and stomach and weak expression in heart. In kidney, very weakly expressed in the inner medulla, but abundantly expressed in cortex and outer medulla in the medullary thick ascending and cortical thick ascending limbs of the loop of Henle.

It is found in the basolateral cell membrane. The protein localises to the apical cell membrane. The enzyme catalyses 2 hydrogencarbonate(out) + Na(+)(out) = 2 hydrogencarbonate(in) + Na(+)(in). It catalyses the reaction 3 hydrogencarbonate(out) + Na(+)(out) = 3 hydrogencarbonate(in) + Na(+)(in). In terms of biological role, mediates sodium- and bicarbonate-dependent electrogenic sodium bicarbonate cotransport, with a Na(+):HCO3(-) stoichiometry varying from 1:2 to 1:3. This chain is Electrogenic sodium bicarbonate cotransporter 4, found in Rattus norvegicus (Rat).